The sequence spans 390 residues: GTPase Obg (390 aa).

One can recognise an Obg domain in the interval 1–159 (MKFVDEAVVK…REIRLELLLL (159 aa)). Residues 160 to 333 (ADVGMLGLPN…LCYKLADFME (174 aa)) enclose the OBG-type G domain. GTP-binding positions include 166-173 (GLPNAGKS), 191-195 (FTTLI), 213-216 (DIPG), 283-286 (NKVD), and 314-316 (SAI). The Mg(2+) site is built by serine 173 and threonine 193. Over residues 367 to 382 (TEDDDDWDDWDDEEDD) the composition is skewed to acidic residues. The interval 367-390 (TEDDDDWDDWDDEEDDGHVVYVRD) is disordered.

The protein belongs to the TRAFAC class OBG-HflX-like GTPase superfamily. OBG GTPase family. As to quaternary structure, monomer. Requires Mg(2+) as cofactor.

The protein resides in the cytoplasm. Its function is as follows. An essential GTPase which binds GTP, GDP and possibly (p)ppGpp with moderate affinity, with high nucleotide exchange rates and a fairly low GTP hydrolysis rate. Plays a role in control of the cell cycle, stress response, ribosome biogenesis and in those bacteria that undergo differentiation, in morphogenesis control. The protein is GTPase Obg of Vibrio parahaemolyticus serotype O3:K6 (strain RIMD 2210633).